Here is a 543-residue protein sequence, read N- to C-terminus: CTP synthase (543 aa).

An amidoligase domain region spans residues 1–265 (MTRFIFVTGG…DQIVLDKFGL (265 aa)). Serine 13 serves as a coordination point for CTP. Serine 13 contributes to the UTP binding site. ATP-binding positions include 14–19 (SLGKGI) and aspartate 71. Mg(2+) contacts are provided by aspartate 71 and glutamate 139. CTP contacts are provided by residues 146–148 (DIE), 186–191 (KTKPTQ), and lysine 222. UTP contacts are provided by residues 186–191 (KTKPTQ) and lysine 222. The Glutamine amidotransferase type-1 domain occupies 290–541 (TIAMVGKYMD…IQAAVEQNER (252 aa)). Glycine 351 serves as a coordination point for L-glutamine. Cysteine 378 acts as the Nucleophile; for glutamine hydrolysis in catalysis. Residues 379–382 (LGMQ), glutamate 402, and arginine 469 each bind L-glutamine. Catalysis depends on residues histidine 514 and glutamate 516.

It belongs to the CTP synthase family. As to quaternary structure, homotetramer.

The enzyme catalyses UTP + L-glutamine + ATP + H2O = CTP + L-glutamate + ADP + phosphate + 2 H(+). It catalyses the reaction L-glutamine + H2O = L-glutamate + NH4(+). The catalysed reaction is UTP + NH4(+) + ATP = CTP + ADP + phosphate + 2 H(+). The protein operates within pyrimidine metabolism; CTP biosynthesis via de novo pathway; CTP from UDP: step 2/2. Allosterically activated by GTP, when glutamine is the substrate; GTP has no effect on the reaction when ammonia is the substrate. The allosteric effector GTP functions by stabilizing the protein conformation that binds the tetrahedral intermediate(s) formed during glutamine hydrolysis. Inhibited by the product CTP, via allosteric rather than competitive inhibition. Functionally, catalyzes the ATP-dependent amination of UTP to CTP with either L-glutamine or ammonia as the source of nitrogen. Regulates intracellular CTP levels through interactions with the four ribonucleotide triphosphates. The chain is CTP synthase from Saccharophagus degradans (strain 2-40 / ATCC 43961 / DSM 17024).